We begin with the raw amino-acid sequence, 21 residues long: Thanatin (21 aa).

C11 and C18 are joined by a disulfide.

The protein resides in the secreted. In terms of biological role, insect defense peptide with a broad spectrum of activity against Gram-positive and Gram-negative bacteria and fungi. No activity against S.aureus. Stops respiration in bacteria but does not permeabilize their inner membranes. The sequence is that of Thanatin from Podisus maculiventris (Spined soldier bug).